The chain runs to 15639 residues: MASEHTSDGLRKLLLDLALEVLEIEPTRFRPEKSFLELGGDSLSAIEFMAKCRANDIDVDVGIILRAKNVADLVDKIIEQQLEEEEEDDDSLDNESERDHSQKDLMPSHLLELSDALLEKVIKPTNVEADLRAAIHCISPCLSMQEGCLISHAIDPEAYQCRFVLKITSTNPTNLFNAENLAEAWRRVVARHPSLRTSFMESQNRPGKFDQIIWKSVRPQISICQDVSQVVAPTTPPKLDYSQPPHHLVLAQGSAADLYVRLDISHAIVDGQSTEVLLHDLWQAYQGRLPQGEAIAVTDILKLHNSSTAADAAAYWSDYLSKAQESYLPMKVNQAASTNLSSIKRTIKVAQDDLEAFCAKRGVTIANLCQMAWGLVLRSFTNSDKVCFSYVTSGRQVPLVGINEAVGAFITTLIQRLDFNRSKDIAEVLTQVNDDFIQSVPYQHLSFNDIGLKSARQWGNSILSMHRPLPTQVYANSGIGFEPITRTTATDYDVSLNIDIFTDSIVLNMDFWLSKMSEEDAHSTLKVYEKAILFVLNNSDKMTRDFLPLTEDDRATIHARNQKIPSKVDKCVHDLVLETISKQPDAVAVQAWDGQWTYSELNEKATRVAEFLISLGTGPEVKVGLCMEKSRWAPIAMLGILKAGGVVVPMGTQHPLSRVQTVLEDTKAIAILTDKEQETRLGGLKVRKITIDAEIMSNANGSILANSTKVSPDNAAWIVYTSGSTGTPKGVVLEHAALCSSITGHSAAFQLDNKTRTLQFAAHTFDAAIQDVFTTIFVGGVICIPSEHDRMNALERVMDELKVNFATLTSTVAGLLRPQAIPSMETIVLVGEAVKPAVVEAWLPHSRVLNAYGPSECSIHSTCSKPITDKRDALVIGFPLTDCLWVTDPDNYNRLSPIGASGELLIEGPILARGYLNDLEKTGKAFVVDPDFVHELGLPKGRRMYRTGDLVRQNSDGSLTYLGRRDTQVKIHGQRVEIGEIEYHITRHSSVEEAVVVKVSGGPMDGRLVGAIVLKNFVSGTYHGTSVKEIDMGQHASAMLQVSDVQLHLSERVMQYMVPTFWIPVNSLPVNASGKIDRKVVGTWMADLDMDTVERLSGTGEEEEKEQTPATAIEKELRRIWSETLNIPLRNISYRNSFLSLGGDSITAMQVVSICRSVDISVSVKQVLECRALSELALVARSTTESVDDLSVVPDGEFTLAPIQQQYFDLVAADGLEARSSNRFNQSVHLSVRRPIGVAELARSMEAVVAKHAMLRARFVPDTGSGWSQRIENQLVGSYRLKVSQVESMEQVQSTIYDAQDSLDLQNGPVFSADLISIKDQQLVSMTAHHLVVDLVSWRIIVRDLEQLLSDRTLQNTRSLSFPTWLQLQRDHTEEKISESTAALPFDVSPADLKYWNLQPGTLTVKDRIIEMIEVDELTTSLLFGAANNAMRSEPVEILLAALFHSFANTFIDRPVPAIFNEGHGREPWSDELDLADTVGWFTTMTPLQVTNTTGDIVDTLKQTKERRRRIPEKGMTAFAAQYFSGKSESQVMEILFNYEGRYQQLENEDGLFRLAQPSDLGDADQSLSVGQDVKIQAAIDINASVSSKKLQLRIGFSKQSRRQDDMKQWMVACGETITHLVKRLAHMAPMMTAGDFTTATLTEDDVMFLEQTYLPEIGLNIPTDVEDVLPCTPIQQGILFSQENSKSTYKVRQLVEVLPRDASRPVSVDQLVKAWRTVIRQHSIMRTIFVDSLPNQQRFHQVVLKEVDAVADIHILQNTQNRSLHDILAEQPEFDYRGKERPPHRFTIITDISGKTFAHFEISHALVDASSIELLVSDLFAAYGGMPSGKASHYGEYVAFLESKPITDDLIYWKSLLEGAEPCKLPLASIDNATTTGSFTTRKHVGRQLTDLEELQTFRKEHEITIATLFQLAWSLVLKSRTGSSKVSFGYLSSGRDVPIRDVEGLVGPMVNLMICHNHLDQDESVIAAARKIQTKFLDSFAHQRVPLDAIQHSLQLSGQALFNTTLSYKNSAASDSNAASSISFNRLEAEDPTEYDINIDITAGKTDIAVTLQYSPETLAQSSADELLQQLVEIVQMLCHNTETSLGNLSLLTNNDVTSIKAWNAGPFLSDDRLLHHLIQEAAKEYTNASAICAWDGEVTHDELNALTDRLAHHLRLELGVGPEKTVGVCMDKSKWAVVSMLAILKAGGAVLPLGVQLPVARIEFLLRDASAVAVLANQQHATRLRDVAPKALVIDEQLFSEIPELTGPACTDVKADSAAWVIYTSGSTGMPKGVVLQHSALSTSLLAQGPALGITKGTRTLQFAAYTFDVSIGETFATLIRGGTVCIPSEDRRVNNLAGTAADMRVNLAILTSTVAGLLEPAEVPLLSTIVLAGEAASPAVVDKWLGHAAVYNAYGPAECSVLASSSKPMARKEDAPVIGYPLSGCFWVADPTDYNSLVPIGVIGELLVEGPQLAREYLGDEERTKTSFIQDPEFVTKLNLGHGHRMYRTGDLVQQNLDGSLIYIGRRDNQIKIRGQRVEVGEIEYLVTSHPAVKDAVVILADKGLLKNKLIGVIATHDSIKDGGYGSSVEIADEHHRQTASPYTAEIRRLLSQNIPAYMIPTLWVILATIPINSSGKVDRAQIKQSLFTMDPKALGLVLASNTQDKLRTVPATALEKQLLTAWSKTLNLVPEQIGYGQAFTAVGGDSVTAMQVVSELRKVGVTFSVRDVLQSQNIAELALKAKSTTAHQAEETPYEPFALSPVQQMFFDDIAADGLVSAGEHRYNQGFWLSVERPTGVDELARAIEILVGRHAMLRARFFHDGEHGWKQRIQEELQGSYRFRAMQVESDDDLAAISNASQKSLDLEHGPVFSVDVVNRESQGQMMYVVAHHLVVDLVSWRIILRELEELLRNRTMSEQVPLSFRSWNHLQSQYSQGLSDVSATLPYSVPSADWSYWGLEQGYKAGDQIQKSVVLEEAITNKLFGDSNRALRTEPVEILLAALFYSFQATFDNRPVPAIFNEGHGRETWDESVDLSETVGWFTIMTPLACAEEHSDIVDLLAQTKDQRRRIPSRGLPYFTSRFLTEEGKRSFVDHRQMEILFNYQGRYQQTESKDALFRPIDLSNLTTKASAPAVGSLVKQTAVFDIDVSRAVDSTHVAFRFSQHISRQDDIARWMLKFQMSVTELLHRLEQMEIRVTSSDFPLTQLTRKDLMALQQTSSSLPGLSSLDNIQDIYPCSPTQQGILISQSKNPEGYQIRQFIKISGMGGKPVDIAVIKCAWQRVINRHSILRTIFIDWLPSQLSYHQLVLKGWTADVPIIACQDESAIKTHIKGLAELKYGDNKLPHEFTLYQTETGEVYGFFQMSHTIVDAWSIDLIVRDLVAACDREAKFMPAPRYGDYISYLKEDTSDKDIKYWTKLLGNVEPCHLQIEGQDSKSENESAFEIKSSIEDLTAFRGLQEKQGITSASLLRFAWAVVLSAYTNSSQVDFGFLTHGRDVPVSGIENLAGPTINMSVCHLRIDSGSASLDGIKKSQDLFLEGLEHQRSSLADIQHHLKLSNQALFNTTMSYRQATSADALKSSSIVIESVYAENPTEFDINVNIVAAQDRIDVELHYKLSAVSHTAAQRLLETLVHVADQLARQTVAKLDDLIMMSPEDLNKIRTRNALVPSRLHSFVHELVAEKTFTQPHAPAVAAWDGDMTYQALDAVSQTLAGYLASLGVGPETMVGVCMGKSKWAVVSMLAILKAGGTVVPLGVNAPLSRIEHIVRDTAATIVLVDVAQADRLATIASNIIDVNDDLIDNLPACSTPPCAAISPDNAAYVIFTSGSTGTPKGVILEHGALCTSLRAHGKAFSLDAHSRVLQFAAHTFDAAIQDIFTTLAFGGCVCIVSEDERMNNLAAGMRRTGVNFAALTSSVAALIHPDDTPDLKTIILVGEAVSEVVVKRWIQSSRLINAYGPAEGSICTTCTAPMRSDFEASNIGYPVAGCVWVTDPADYNRLCPPGVPGELLIEGPLLARGYLNDAEKTAAAFVREPKFLKQIGISNRTGRLYRTGDLVRQNPDGSLTFMGRIDSQIKIAGQRVETGEIENQIARLLPTVRQVSVDLIQDPSRSGARTLVAAIEIHTNDTKPSQQSLEPVKYSRGLHKQIEALQDSLAEVLPSYMVPKIFVPLVTLPVGATGKLDRRALKQYLESLDNSELRAFVANEAVKEPPSNDAERMVQSLWAKIFKRPTSAIGINDHFFHLGGDSVLAMQMIAAAHEEAMDLTVADIFRMPRLHQLAAIVTQRGFKAESSESMNPAPFNLAQHLLSSVSEERDRQFAELAEQCSIGVEDIEDVYPCTPLQENLIASTLHNAEAYIARRVFRLRPEVATDRFMSTWTQLSEMQPILRTRILFTTLLQPVQVVVRKSVSWNTAESLQQYLDTDRKQPIGEGEALCRLALIDEGDRYFVWTMHHSIYDGWSTSKMLEVLSNLLEEKPVSPAVPFSRFVKYVAVQDAETTQNFWRQQLDGVVSATRFPALPSASYKPRPTKKASLTLTATRQPGQVTTSIALRAAWAKLVATYTNTDDLVIIEALSGRNAPVSGILDILAPTVTTVPVRVRLQPQQTIRKVLADLQQQSADMIPFEQTGLQNIKRIAPGAGSDLGSEHLFVVQTALEQASKDNTGPFDRVLDADVPLDYALLMECTMDLTRDTVDVQASFDEAVMSADQIEMMLFHFQQIFEQILAHGTGLEEETEKGETMGGIDLLSKQDMDLIGSWNAKPYQALDACLPAQVTEAASTRPDAQAVCAWDGAMTYAELEQQAGRLAHYLSGRNVGPEIKVGVCMAKSKWAVVSMLAVLKAGGVVVPLGADHPLLRIQHMIRDTGMDLILVDSAQAERLASTGPDLVIVSEVFVDSSLGQETFSRESINPESAAWIVYTSGSTGTPKGVVLTHKSLCTSIKAHGTAYGTSSGTRMLQFAAHTFDAAIQEVFTTLIFGGCVCIPSGDDRVNDLIRVICDMDVSLAALTPSVAGMILPSSVPSLKTLILIGEAVTSAVLSKWIGAITVFNGYGPTECSIYTTCKRMESVKDLGNIGSPLGGRVWVTNVTNYHQLCPVGAPGELLVEGPILAREYLNDTPRSSASFVENPGFVKRFGLEGQRMYRTGDLVRQNLDGSITILGRLDTQAKLRGQRLEATEIENHIIQSQSGIQSSVVSIVQLEGATTEPVLVAAIEFSSGSEFTKQEKQNDGLIESSDVLRAWFQKTQESLYQTLPAYMVPKIYIAMERLPLNTSGKLDRPKVRQLIESLHSDTLASYSSAGSNTVEPATIMERQLQKLWASVLNKPQASVGADDHFFQIGGDSVVAMRLVASARQEQIHLSVAQIFKHPRLCDLASHIDHHTLLEETGDLAPFALWLGEDQAESRSSAMQKLASQCDVAVEQIEDIYPCTPLQEGMMALTMQNPRAYVFQSVFRLDDTLQSERLVAAWDKLVDIVPILRTRIVALADSRSLQCVIREPVQWKKSNSLKDYLRQDSQDIIKSGSRMSRCALIEGEKSERYFVWTAHHGLYDGWSRMRMMELLSKIYNSETLPTLPPMSRFLSYLGGSSQADMKTFWQNQLANLAVAKFPALPHATYQPNVDCIAKRQLIGQPANSSVTTSVALRAAWAITVATYTSSEEALLAVALSGRTAPVEGILDLLAPTITTVPVRIRIPHSRTVRELLEEVQKQATDMIPYEHAGLQNMPQLVDDSSVLASLGHLFIVQSTLDGVSVRGHVAPEKTLGLHAEEANFTGLDSYALNVECTMLNEDKIHVDARFDKNVVSEKQVERVLDSFATVFAQLCDSSAAETLVQDVVVIGEKDAQAIRAENAVVTPTHERCIHDLVMDSTLKYPNEPAVHAWDGGFTYQQLDAAATRLALYLSQQGVGPEVKVGFCMDKSKWAVVSILAILKAGGAVTPLGVQHPLPHIEKILSSTKATIILADAQQASRLSGLAAKSVVVDGKLLESLPGSVSGQTVCKVVTPDNTAWVIHTSGSTGTPKGVLLHHSQLSTSFKHQTVAFGIGQDTRTFQFSAFTFDVSISDVCLTLYVGGCVCLPSESDRMNDLEKTARDMEVNLLMITSTVAGLIQPTNVPSAKTLVLTGEAIAPNVVTQWLGHATILNAYGPAECSVDSCSVAFTSPAMASNIGYTTAACFWVVDQLNPHRLVPVGTIGELLIEGPLVSHGYLNDPEKTSQSQMVGPAFFKQLGLEQSRGRIYRTGDLVRQNADGSYEYLGRRDSQMKVHGQRVEAAMIEELIVRLLPDAHVSLVDLVLFGDGKADSTLVASIEFKTDSIYQQHVTSSGLLAATDELREALYHVRTSLADSIPIYMVPSVFVPFARLPTNMSGKLDRKALQQIYKTLGQEELDLYAPQAGEAAGAQPSTTAEIKLQALWATVLRKPSAQYSTRDHFFQSGGDSVSAMRLVAAARQEGLQLAVTDIFNNPRLEDMAKIVEEHVEEEELVDVAPFSLWEADIPTPEQRKSELADLAAQCKVATDNIEDVYPATPLQEGMMAITMQSPRAYVSQVVYRLDKEMDLDRLIRTWQRAEQIAPILRTRIVARPEAASVQVVIREQSEWSFGNDLEAYLAQDKKSPVTFGGPLSRFALITSKQKSERYFVWTCHHSLYDGWSRNRIMDAVARAYTGEEVGPSTPVTRFLQHLGNAGEAETSKFWNTQLDGLTATKFPALPHSGYQPYVKSVVSQRVRDTSINGVVTTSVLLRAAWAIVVAAQTGNKDVLLTVSLSGRTVPVPGILDMLAPTLTTVPVRLRVEREQTIAAFLREAQKQATDMMPFEHTGLQGIRRLLPKNAAPLDPGHLFVVQTSLDKDDGSGSDTFGLTPMDPEIDGFDSYALNISCTVLEDEQQVEIEARFDEQVLSQGRTTALLERFAKVYQQLSHLATANAGAGACVGDISTLCQSDIAQLKDWSARASYDKAEHCLHTLVHEATIKYATSTAIEAWDGSMTYAELESAADRLAQHLASLDVGPETMVGMCMDKSKFAAVAFFAILKAGGVCVPLGVQHPVSRVEHIVQDAGATVLLVDKQQAERLNDMESDAKVITVEEDFLSRLPQSNGFVCHNVTPDNAAWIIYTSGSTGTPKGVVLQHSAIVSAMLGHNAAFGLNSKSRVLQFAAHTFDLLISEIFSTLLCGGTICIPSEETRVSNLAQTAKAMGVNFTWLTSTVASMLTPQELPDLKTLILIGEAASAAVVETWLGHATVLNAYGPSECSIHSSCSKSMVKKEDTPVIGFPVCGNFWVVDAEDYHRLAPVGGVGELLIQGPHLAREYLKDEAKTAAAFVNNARWASELGITHSTQKMYRTGDLVQQNPDGSLTYLGRRDTQIKIRGQRVEVGEIEHHITQHPAVWHAAIVRPSTGPLAGRLAAVVVLHHSAAGNGYSSDVLPLEAELQMANAVTQEVQSFLTERVMQYMVPSTWIPVAALPMNLNRKTDLGRLTRWVAELDEKALTAYQTEAEDDELVSARGTAMEEQLRTVFSRILNVSESRTRLDRSFLSLGGDSVTAMQVVAQCRRLGIQLSVRDVIQSKSISQLALLASTDESEVAHDAVSYEPFALAPIQQMFFDQVASDGMNVMGENRYNQSVCVRLNQAIELSSLQAALDAVVDKHAMLRARFQVDKQSWTQRILETVQGSYRFQTVTAGSEDEIFDILETAESALDIENGPVFSVTVINAPGRQLVFLVAHHLVIDLMSWRIILTDLAELLQNGGQDGKYTLDRSLSFPQWSRLQAEYSHTIKSLDSVLPFDVPAADWAYWGLSAGDFVTRDKIHEHVEISKQITELLLGEGANSALKTEPVELLLAALFQSFHKTFPNRLVPAIVNEGHGREPWDSSVDLSETVGWFTTMTPLHVPVDSQSYDVVETLKQTKERRRQTPGRGLPYFTARYLTKEGRTKFADHQMMEILFNYQGQYQQLERDDTLFSLETLGGRGQPSRVGQNVRELAVFDVAVTVSQGPLHVSIGFSKNIRRPKAVQDWLTAYSKTLEELTTQLVSLAPTRTSSDFPLASLSQQDIDAIATENLSSTGLGFNDVEDVFPASPMQQGILLSMSKNPGTYYVQQTCEFIPKADVKYDTARLASAWQLVVDRHAILRTFFTDALPDQHAYHQIVLSAWTADVQIVKCAHQTEVQSQIGARAQQAFAADQPPHRFTVYEVGDESLYGHFEISHALVDASSVQLLVHDLLRAYDGSLPAAQGPRYSSYISYLQERSPEEDLKYWTSVLGDVEPCQVKTVTFGPAQPIDERPQNIAAEIENLEILQRFGEAHGVTLATLFQLAWAMVLGRHTGLQQVCFGYLLNGRDVPVAGIEEMVGPMINMMVCAVSLDNKELAVPEAAQLVQKQFLEGFEHQRTSLGDIQHAFKLSGQALFNSVLNYKAAQSTDGAQTTSLSIAGKGSEDPTEYDISVNVTKTTDRISLSLQYAQAEVSPALAQRLLDGLLQAVHTLAGSDASQRMRNISLASVKDVAKFREWNTHTPPRVESTVHALVQKSVHARPDATAICAWDGEMSYGELDAAASRLASRLVDDHGIGPEAKVGLCMDKSKWVVVAMLAILKAGGAVLPLGVQHPLERIAHIVRETEAKVVLVDEGQEKRLAEMDVSTLVVDEALVAGVSDALDSKTQTSSPDNTAWIIYTSGSTGTPKGVVLQHGALATSLLAHSKAFGMGVHTRSLQFAAHTFDASIQDTMTTLTIGGCICIPSETERMNSLSAAVARMGANCANLTTTVVGLLHPSEVPSLKTIIFGGEAVLPSLVDLWAPHATLINSLGHTECSINSSFSQPMTHGWQAPGIGKAICGSFWVADQVDFNQLVSIGSVGELLIESPQLAKEYLRDSAKTAAAFVTDPDFVHQLGFTKGRRMYRTGDLVRQLEDGTLTYVGRRDTQVKIRGQRVEIGEIESTVLAVLPEVRSVVVNLIKRGDSQQTLSVAVEFVAENTFLEGEVNTDTGLIAPSKELLEAFGLLRDRLTEVLPLYMVPSIFVPLVKLPLNASGKLDRRATQQLVESLDDATIAAYSSSAAKVQPATDAERQLQTLWAGVLDKDVNAIGATDHFFQLGGDSVVAMRLVAAARQENVQISVADIFAHPRLRDLAKTIQDSETADEEGDAAPFALWEESLDMANSQQRQQELIKLANECAVEVDQIEDVYPCTPLQEGFMALTMQNPRAYVFQSCFELDSKIGTDTLISAWEQLMDVVAILRTRIVALPDSQSLQCVVREKLPWTFSNKSLDDFLASDNQTPMTSGSRLCRCAIVEEPQDNKRYFVWTVHHGVYDGYSRSRMLELLTKILTGHSLPPLTPIPRFLQYLARVDDDEAAAGRFWKAQLANVAAPKFPALPHAAYQPRVDSTARMQIAGPRLAASSGVTTAVAIRTAWAIAVGAHTNSDEALLVVALSGRAAPVDGILDLLGPTLTTVPFRVRIDREKTLSELLTQVQSQASDMIPFEHTGLQKVQVLAGSGPLELGHLLTVQSTLSDERDDPVEALGMHAREVSNLGSDSYALNVECSIWNVENKINVEARFDGNVISQDQVEAILDGFAAIFRQLCDENIAARTKVSEVSVIGEKGLELLRARTDKMPAPYEVLVQNMVTNSLIKNPHAIAVNAWDGDLTYQQLDDAASCLAHHLVRSFGIKPEDKVAFCMDKSKRAVISMLAILKAGGAVTPLGVTHPLQHVQRVINNASSPLVLVDKKQAERFAELSVPTITIDDELLDNLPAYSGPACSSLTVNNTAWVIHTSGSTGIPKGVLLHHSLIATSAKYQAILYGCVGPHTRTLQFAAHTFDMNIFEVFLTLYGGGTICILSEEDRMNDLERQANAMKVTLAFLTSTVAGLLDPTKLPSLHTIVLTGEACTPSVVQQWLDHAVVLNAYGPAEGSVASITKAYTHAEEYSNIGFETAGCFWVVDQLNSDRLVPLGTIGELIIEGPLVSPGYLNDAEKTAQMFIVDPAWVTDLGPTRGRRMYKTGDLVRQNQDGSFEYLGRRDNQMKIRGQRVEAAEVESAIVRLLSGVRTAAVDLVKVGNDADKQVTLVGAFEFVPGTEFTTQGEAEGGLLAPSQPLREALQTLRKDLLQGLPPYMVPSIFVPLVRLPQNLSGKLDRRALRQMLEGLDGTQLTSYASEDSERIEPATPMEMQLAKLWATVLRKPVESVSASDDFFQSGGDSVAAMRLVAAGRQEDVDFTVADIFREPRLSGLAALIQKQIDEEEEYDDSEEEEEDDEEEVREVKGDVAPFALWKEEDGAIADLAAQCGVAISEVEDVYPCTPLQEGLMAITMQSPHAYVSQAVFKLGQDLDIARFKAAWQKTTEKVSILRTRILACRDSASLQVVLRQPIEWKSSGKTLHAYLADDKDTPMTLGAPLCRLAIVENNNERHFVWTCHHSLYDGWSRHRTMDLVSRIYAGSEVGSITPMARFVNHLVKVREVDDTRQYWNAQLRGVTATKFPALPNATYQPLVSTVLRQKMSFTPLPGTITTAVMLRVAWAMVCAAQTSNSDVLLAVSMSGRTIPVPGILDMLGPTLTTVPVRISIDRDEGLHTFLKAAQRQATEMMPYEHTGLQAIRRLLPDGGAKVDLDAGHVFIVQTSLDKTADSVTRPFGSALEPIDINQHGFDSYALNVSCTANDDEQEVEVEVRFDNKVISEYQMQSVLDRLATVLQQIGHLGQAAKVADLQVLSETDKTKIKAWNGICPPRIESCVHMLTHKQAIERPNAPAICAWDGDMTQRELDAAADRLAGHLASLGVGPEVKVGMCINKSKWAVVCMLAILKAGGAVLPLGVQHPIPRIQHILRDTAADVILVDEEQVERLGSLGSETRLVTVDERLVSSLPQPAAPVCSTVGPENAAWVIYTSGSTGVPKGVVLQHFALCTSLVAHGTAFGMGSDTRSLQFAAYTFDASIQDTMTTLVNGGGCICIPSEDERMNSLAAAIRRMKVNCATLTSTVAGLLDPTEIPLLKTIAFGGEAVGPAVVERWGKYANLLNSYGATECSINSSCSKPMTEAHHAANIGWAIPNSGVFWVVDSVDFNRLAPIGAVGELLIEGPQLAREYLNDPVKTASSFVVDPSFIAQLNLGSGRRMYRTGDLVQQQEDGSLIYLGRRDTQIKIRGQRVETGEIESAVRRFLPDVRAAVVNLVQRGGDNALRVLTLAVEFIAESSFQTGETSSTDLLAPSQALREAFADLRDKLLEILPPYMVPSIFVPFVKLPVNTSGKTDRRAVKELIEALTEDALAAYTTTSLTKTEPATGMERHLQALWASVLNKPIESVGANDHFFQSGGDSVVAMRLVAAARQKDIHLTVKDIFSFPRLSDLARETESQGAAEEEDVAPFALWEQSGSNAIDEIARLCAVSSDGIEDVYPCTPLQEGLMAITLQHTNAYVSQRVFKLDASIDVAQFKNRWDSLVELLPILRTRIVPASLSSSLQVVVREAVQWQTASSVEEYLRRDQNTPMTHGGALCRLALITEQDGTNTFVWTIHHSIYDGWSVIKMMGMLDGLSREQTLPEVVPVSRFVKYLTQQDPAASESFWKQQLEGANLTPFPALADTTYKPRPTNRVRFQFSKLKRHGSVVAPAILRAAWAITVATYSGTDDVTLTVALSGRNAPVPGITDIVAPTVTSVPVRIAIQQDQPVAAYLSAIQQQAVDMIPFEHTGLQNIKRIALPAGASFGSGHLFIVQASVDNDRAAATQFSGMTEQFSDQDINMDYPLIVECTTDPEQAMVEVSVSFDNAVLSPDMVDGMMHGFETIFQQLSSVNEQDGTDNSVKISDVQLLGRKDSEMIQSWNKTLVPRATDCLHHTFKRTADKQPERPAICAWDGNFTFHELNQTADRLAAHLIARGVGAEVMVGVCMNKSKWAVVGMLAILKAGGVVVPLGVQHPLARIEHIVKDADIRVVLVDSQQGQRLGDNLAEKIVVDDALLTSLPNPASVKDVRVTADSAAWVIYTSGSTGTPKGVVLEHGSLATSIQAQAAAFGITPETRALQFSAYTFDISIQDMFATLLHGGCVCIPSEEARVVGLAGAIPELKVNSAALTSTVTALLDPAEVPDLKTICFVGEAVNQSVMDKWVHHCSLINAYGPAEASICTTFNQIKKGDAASTIGTPLAGRVWVVDPTNFNRLVPVGAPGELLIEGPLLARHYLNDPIKTEKAFVQAPSFTPHFGISAGTRMYRTGDLVRQNAIGSLTYIGRRDTQIKVRGQRVEIGEIESLVKRLLPSAHTAVVDLITRKEGSEALTVAIEFAAGQPASVANPSGSPLSSPTTALREELSNLRAALFEALPSYMVPSVFVPVVKLPVNASGKLDRGAVRRLLQDLDDEQLGAYVSAEAERKEPSTEMERRIQQLWSAVLKKPATAIGANDHFFQSGGDSVSAIRMIASARGMDVHLTVADVFKHPRLSDLAAAVQGRITDEDEEDPAPFTLWQESSVDDIAEHKAKMHDLASQCDLTAEQIEDVYPATPLQEGLMAITMHSPEAYVSQAVFRLEDNIQVDQLIAAWESLVQMAPILRTRIVSQPGQSSLQIVVKERTSWIRQTSLNIYLAEDKKLPIVSGGELSRTAVVEDKSKRYFVWTCHHSIYDGWSRRKMMDLLARIYNDEVVEGLTPIPRFIRYLTQVSRQDTETFWRAQLEGVAVSKFPTLPHPTYQPRTSSMVRKTFSNASSANVATMSAVLRAAWTLVVNAHTGTDDVLLAVSLSGRTLPVPGILDLIAPTLTTVPVRNKIDRNQSITSFLEQVQSQATAMMPFEHSGLQQIRRMLPGSGTDLDPGHLFMVQTNLDQEDVGAVSDIGLRFEETGVEGFDSYALNILCTTSDGAHGTEVEARFDDKVISHARVEALLNRFDHVFAQLVTETTASQKRIQDIEMVSEQDVAQMRSWNTAASLQPVGMCVHDLIRDSFSSRADEIAICACDGDLTYGELDDASTRLAQYLVSLGVKPEVKVGMSMDKSKWGPIAMLAILKAGGVVVPLNVAHPVMRIEGIVKDTEMTIAVLDAGQADRIGHLVSNAVVLDAAFLDSLPQVNSRFSTTVTPENAAWIIYTSGSTGTPKGVVLQHSALSTSLKAHGAAFGMNSSTRTLQFAANSFDATISEFFATLLYGGTVCIPSEDDRMSDLTNICNSMKVTLAMLTSTVAALLGDIPTLKTLILVGEAASPAVVEQWLSRATILNAYGPSECSIHASCSKPMAAKEDTPIIGYALSGCFWVVDPTDHNRLAPLGGTGELLIEGPQLAREYLNDSAKTSSAFVVDPAFITKLGLGTGRRMYRTGDLVQQREDGSLVYLGRRDTQIKIRGQRVETGEIEHHIAQHSAVLRGAIVRPKTGPLAERLVAFVVLNELAVGSGYSSEVLEISAEDRTHANEVATGVKKYLSDRVMQYMVPGVWITLAALPMNINSKTDLLTLTRWAAEVDDETVATYTNEDTQTASMPGTVQEEQLRSIFSLVLNIPEVRIPLDRSFLSLGGDSVTAMQVISQCRKQGITLTVRDVIQSQSIQQLGQKVKEAVDDNEELNKVSYKPFGLAPIQQMFFEQIVPKQGSGDGENRYNQSVFLKLQQRYALEVIRRAVDAIVDKHAMLRSRFERTADGLWTQRVAQKLDASYSFHNQSVESEDEIYAILDTAEKSLNIENGPVFATRIIDTSDKQLLFLVAHHLVIDLMSWRIILNDFAEALQGRSLAASRSVSFEAWAKAQNEYSKTLQIEKVLPYTVPMADWNYWGVPIGSYLPADKVYQTIDVDEKTAALILGDSNTALQTEPVEILLAALFHSFRRTFLDREVPAIVNEGHGREPWDDSIDLSETVGWFTTMTPLHVAVEKDDLIKTLRGTKEHRRQTPGRGLPYFTSRYMTEQGREAFAHHRAIEVLFNYQGRYQQLERQDAVFSLESLARGVPSPVGANVPELALFDVSVTALASTMQISIGYSRNIRDSALVHEWATNYGNTLKDMTSTLLQMAPTRTPSDFPLATLTDADLSTIEKKNLVPASLVYANVEDILPCSPIQQGILLGQVKAPSTYHIQQTCRFRPKSKHTLETDVKRLSRAWQRVVQRHSILRTFFVDSLASHDSFHQVVLSSWSADVTVVNCTTADEAKAYFATHNPFAANQPPHRFTLVCVGGSDLYGHFEISHALVDASSIELIVNDLLQAYDDKLTVAPGPRYSSYVAHLQKSSAEADLGYWTALLQDAQPCHVRDAPKDLQNVDNTLNKLTSQMTDVATLQRFSEINGVTLATVFQLGWAMVLSSYTNLPQVCFGYLTNGRDVPLAQVDEMVGPMINMMVCTIKLDGETAVSEAAKHAQQSFLEGFDHQRTSLAAIHHALHLSGQPLFNSALSYKREQTVSGQQKPASLALESVASEDPTEYDVSLDVNWSEHSIGLSLVHTRQLSSGLAKSLLDSLVHVVTQLVRGDRTSKLRDISIVGEHDLQQIKAWNTIVPSRMDATLHTLVRDAAHRTPDALAVHAWDGDYTHVELDSTVQRLATRLRALGVRPETRVAFCMDKSRFAPVAVLAILNAGGAVVPLGVQHPVDRVNKIVLDAEAQVMLVDATQAARLVGVVPNMIVVDDKFLHNLPNVDSEQSQPTITPDNAAWVMYTSGSTGVPKGVVLPHGALATSLMVNGKSFGMGPHTRTLQFASYTFDDSIHDIIATLSFGGCICVPSETQRMNSLAEAITSMRANTAAITPTVASLLDPKAVPTLKTVLVGGEAATPQVIELWGPHATLLNLYGPTECSINACVSGPMTIAAHAASIGRPISGSGLVWVVDPANPNALVPLGAPGELLLEGPQLAREYLNDPAKTSAAFILDPAFLKLLGIEDTGRRMYRTGDLVIQRADGSLDYLGRGDGQIKIRGQRVETGDIEAAVRRLMPAARGAVVDLLARGEQRMLIAAVELVDGERADDGVLLAPSSEIREAFSSLKTALRNVLPPYMVPQSFVPLARLPVNASGKLDRRAVTTILSGLTSDVLASYTSDQGDSQLPASADEGALAGAWARVLGVEQSSITRNDDLFHLGGDSISAMKLVQAARELDLHLSVADIFRNPRLADMASVASAARTTQGEEQQYERFSLVETDKTALLAELPALLKVEESTIHDALPVTDFQALCVAGNTIGSGLEMNYFALDGQHAVDLAALKQGCKDLIQQTEMLRTVFVFHQEQMLQVVLAMSNPPVTLHETDEPLDTFTQQLIERQTSQPIRLGQPMASIDIVASPSSATHRIIFRLSHALYEGVALPMIFQRLSTLLAGQALTQGPSFGAFVADLQSRATQEAYSHWRSLLQGAQMPRLSSPPQEQRLFRMAPLPARSVPLPASVQKGITPAMLVKASWAAVLARHTRTPDVVFAETVSGRASASPDVADVLGCCAAILPVRATIRPDTTTAELLASVREQQILSAQNDALGARSIIRNCTEWEKGTRFTSRINHTLAEDGAVALGEEEYKLSPLPPREWMDVAEVSIASFQFGDRVEVGMSFADDELERGVVEGLLRELCDIMVRLASQQEGTVWDSEERSDSLLPSASAVNGTNGSNGDGTDAANGIGQKTGGTGGHAVEKSSGDAEVEKVSTNGHADNNTSAENRQSELSAAIKHATGTVLKNKLKTERSTEALWSGHADVVDYAHVAFLLQRQGWSVLTEDLVRCRSETELIDVVVKREAERVKGNGSAFNGANGHYSNEESVNGNGLHGVQTNGHAGKGVTNGVNGGSKGHI.

The Carrier 1 domain occupies 5–81 (HTSDGLRKLL…DLVDKIIEQQ (77 aa)). Residue Ser42 is modified to O-(pantetheine 4'-phosphoryl)serine. Positions 82-94 (LEEEEEDDDSLDN) are enriched in acidic residues. The disordered stretch occupies residues 82 to 105 (LEEEEEDDDSLDNESERDHSQKDL). The condensation 1 stretch occupies residues 140 to 553 (PCLSMQEGCL…RDFLPLTEDD (414 aa)). The tract at residues 579 to 971 (TISKQPDAVA…LGRRDTQVKI (393 aa)) is adenylation 1. A Carrier 2 domain is found at 1108 to 1184 (TPATAIEKEL…ELALVARSTT (77 aa)). At Ser1145 the chain carries O-(pantetheine 4'-phosphoryl)serine. The epimerase 1 stretch occupies residues 1219–1626 (RSSNRFNQSV…TITHLVKRLA (408 aa)). Residues 1667 to 2097 (EDVLPCTPIQ…LGNLSLLTNN (431 aa)) are condensation 2. Positions 2122–2518 (QEAAKEYTNA…GRRDNQIKIR (397 aa)) are adenylation 2. The Carrier 3 domain maps to 2654–2730 (VPATALEKQL…ELALKAKSTT (77 aa)). Ser2691 is modified (O-(pantetheine 4'-phosphoryl)serine). An epimerase 2 region spans residues 2761–3176 (VSAGEHRYNQ…TELLHRLEQM (416 aa)). Residues 3215 to 3640 (QDIYPCSPTQ…DDLIMMSPED (426 aa)) form a condensation 3 region. Positions 3669-4059 (TQPHAPAVAA…MGRIDSQIKI (391 aa)) are adenylation 3. Positions 4193-4269 (PPSNDAERMV…QLAAIVTQRG (77 aa)) constitute a Carrier 4 domain. At Ser4230 the chain carries O-(pantetheine 4'-phosphoryl)serine. The segment at 4316 to 4714 (EDVYPCTPLQ…ILAHGTGLEE (399 aa)) is condensation 4. An adenylation 4 region spans residues 4756–5149 (TEAASTRPDA…GRLDTQAKLR (394 aa)). The 77-residue stretch at 5284–5360 (EPATIMERQL…DLASHIDHHT (77 aa)) folds into the Carrier 5 domain. Ser5321 bears the O-(pantetheine 4'-phosphoryl)serine mark. The interval 5402-5802 (EDIYPCTPLQ…TVFAQLCDSS (401 aa)) is condensation 5. Residues 5847–6238 (KYPNEPAVHA…LGRRDSQMKV (392 aa)) are adenylation 5. Positions 6375–6451 (QPSTTAEIKL…DMAKIVEEHV (77 aa)) constitute a Carrier 6 domain. Ser6412 is modified (O-(pantetheine 4'-phosphoryl)serine). The segment at 6494-6889 (EDVYPATPLQ…RFAKVYQQLS (396 aa)) is condensation 6. Positions 6952 to 7335 (WDGSMTYAEL…GRRDTQIKIR (384 aa)) are adenylation 6. The Carrier 7 domain occupies 7473–7546 (TAMEEQLRTV…QLALLASTDE (74 aa)). An O-(pantetheine 4'-phosphoryl)serine modification is found at Ser7507. Residues 7580–7992 (MGENRYNQSV…SKTLEELTTQ (413 aa)) form an epimerase 3 region. The segment at 8034–8459 (EDVFPASPMQ…QRMRNISLAS (426 aa)) is condensation 7. Positions 8486 to 8882 (QKSVHARPDA…GRRDTQVKIR (397 aa)) are adenylation 7. The Carrier 8 domain maps to 9015 to 9091 (QPATDAERQL…DLAKTIQDSE (77 aa)). O-(pantetheine 4'-phosphoryl)serine is present on Ser9052. The interval 9136 to 9535 (EDVYPCTPLQ…FAAIFRQLCD (400 aa)) is condensation 8. Positions 9583–9974 (KNPHAIAVNA…GRRDNQMKIR (392 aa)) are adenylation 8. A Carrier 9 domain is found at 10110 to 10186 (EPATPMEMQL…GLAALIQKQI (77 aa)). Residue Ser10147 is modified to O-(pantetheine 4'-phosphoryl)serine. The disordered stretch occupies residues 10186–10208 (IDEEEEYDDSEEEEEDDEEEVRE). The segment covering 10187–10206 (DEEEEYDDSEEEEEDDEEEV) has biased composition (acidic residues). Residues 10240 to 10662 (VEDVYPCTPL…VLSETDKTKI (423 aa)) are condensation 9. The adenylation 9 stretch occupies residues 10683-11082 (KQAIERPNAP…GRRDTQIKIR (400 aa)). Residues 11217–11293 (EPATGMERHL…DLARETESQG (77 aa)) form the Carrier 10 domain. Ser11254 is subject to O-(pantetheine 4'-phosphoryl)serine. The condensation 10 stretch occupies residues 11329–11725 (EDVYPCTPLQ…ETIFQQLSSV (397 aa)). The segment at 11770 to 12165 (FKRTADKQPE…GRRDTQIKVR (396 aa)) is adenylation 10. Residues 12298 to 12374 (EPSTEMERRI…DLAAAVQGRI (77 aa)) enclose the Carrier 11 domain. At Ser12335 the chain carries O-(pantetheine 4'-phosphoryl)serine. The interval 12418–12830 (EDVYPATPLQ…IQDIEMVSEQ (413 aa)) is condensation 11. An adenylation 11 region spans residues 12861–13249 (SRADEIAICA…GRRDTQIKIR (389 aa)). The Carrier 12 domain maps to 13383-13459 (MPGTVQEEQL…QLGQKVKEAV (77 aa)). At Ser13420 the chain carries O-(pantetheine 4'-phosphoryl)serine. The tract at residues 13476–13901 (APIQQMFFEQ…LKDMTSTLLQ (426 aa)) is epimerase 4. The segment at 13940-14369 (EDILPCSPIQ…SIVGEHDLQQ (430 aa)) is condensation 12. The interval 14390-14789 (RDAAHRTPDA…GRGDGQIKIR (400 aa)) is adenylation 12. In terms of domain architecture, Carrier 13 spans 14916–14992 (LPASADEGAL…DMASVASAAR (77 aa)). Residue Ser14953 is modified to O-(pantetheine 4'-phosphoryl)serine. The segment at 15062-15433 (QHAVDLAALK…DIMVRLASQQ (372 aa)) is condensation 13. Disordered regions lie at residues 15434 to 15511 (EGTV…ENRQ) and 15617 to 15639 (VQTN…KGHI). Over residues 15455–15472 (NGTNGSNGDGTDAANGIG) the composition is skewed to low complexity. The segment covering 15482–15494 (AVEKSSGDAEVEK) has biased composition (basic and acidic residues). Positions 15495-15511 (VSTNGHADNNTSAENRQ) are enriched in polar residues.

It belongs to the NRP synthetase family.

It participates in antifungal biosynthesis. Nonribosomal peptide synthetase; part of the gene cluster that mediates the biosynthesis of the antifungal antibiotic FR901469, an inhibitor of beta-1,3-glucansynthase, exerting antifungal activity against the pathogenes Candida albicans and Aspergillus fumigatus. FR901469 is a cyclic depsipeptide containing 12 amino acid residues and a fatty acid chain. The NRPS frbI contains 12 modules responsible for the formation of the depsipeptide backbone which is denoted as Acyl-Thr-Ala-Tyr-Val-4OHPro-Thr-Thr-3OHPro-threo3OHGln-Gly-Thr-Orn-OH (C71H116N14O23). The PKS frbB is probably involved in the production of the hydrocarbon chain, and the acyl-CoA ligase frbC might be involved in the transport of the chain to the peptide ptoduct of frbI. Because FR901469 contains 3 hydroxylated amino acid residues, the 3 oxygenases frbA, frbH, and frbJ might be participating in amino acid hydroxylation. As no thioesterase domains were detected in frbI or frbB, the thioesterases frbD and frbE may instead release and cyclize the products of the NRPS and PKS, respectively. This chain is FR901469 synthetase, found in Dothideomycetidae sp. (strain 11243) (Fungal sp. (strain No.11243)).